Consider the following 64-residue polypeptide: MAVPKRKTTPSKRDMRRANHDKVTPVQLVSCENCGEARLPHRACGACGHYNGRKAKATKATAAS.

Over residues 1-10 (MAVPKRKTTP) the composition is skewed to basic residues. The tract at residues 1–22 (MAVPKRKTTPSKRDMRRANHDK) is disordered. Basic and acidic residues predominate over residues 11-22 (SKRDMRRANHDK).

It belongs to the bacterial ribosomal protein bL32 family.

The protein is Large ribosomal subunit protein bL32 of Sorangium cellulosum (strain So ce56) (Polyangium cellulosum (strain So ce56)).